Consider the following 303-residue polypeptide: GPN-loop GTPase 2 (303 aa).

29-34 contributes to the GTP binding site; sequence GSGKST. The Gly-Pro-Asn (GPN)-loop; involved in dimer interface signature appears at 85-87; that stretch reads GPN. Residue 187 to 190 coordinates GTP; the sequence is SKMD.

Belongs to the GPN-loop GTPase family. As to quaternary structure, heterodimers with gpn1 or gpn3. Binds to RNA polymerase II (RNAPII).

Functionally, small GTPase required for proper localization of RNA polymerase II and III (RNAPII and RNAPIII). May act at an RNAP assembly step prior to nuclear import. The sequence is that of GPN-loop GTPase 2 from Xenopus tropicalis (Western clawed frog).